The primary structure comprises 165 residues: NADPH-dependent 7-cyano-7-deazaguanine reductase (165 aa).

The Thioimide intermediate role is filled by C56. The active-site Proton donor is the D63. Substrate-binding positions include 78–80 (VES) and 97–98 (HE).

This sequence belongs to the GTP cyclohydrolase I family. QueF type 1 subfamily.

The protein localises to the cytoplasm. The enzyme catalyses 7-aminomethyl-7-carbaguanine + 2 NADP(+) = 7-cyano-7-deazaguanine + 2 NADPH + 3 H(+). Its pathway is tRNA modification; tRNA-queuosine biosynthesis. Functionally, catalyzes the NADPH-dependent reduction of 7-cyano-7-deazaguanine (preQ0) to 7-aminomethyl-7-deazaguanine (preQ1). This chain is NADPH-dependent 7-cyano-7-deazaguanine reductase, found in Bacillus pumilus (strain SAFR-032).